We begin with the raw amino-acid sequence, 1088 residues long: RNA-directed RNA polymerase (1088 aa).

A RdRp catalytic domain is found at 501 to 687 (LSYGDVTRFL…AKRYIAGGKI (187 aa)).

This sequence belongs to the reoviridae RNA-directed RNA polymerase family. As to quaternary structure, interacts with VP3 (Potential). Interacts with VP2; this interaction activates VP1. Interacts with NSP5; this interaction is probably necessary for the formation of functional virus factories. Interacts with NSP2; this interaction is weak. Mg(2+) is required as a cofactor.

The protein localises to the virion. The catalysed reaction is RNA(n) + a ribonucleoside 5'-triphosphate = RNA(n+1) + diphosphate. RNA-directed RNA polymerase that is involved in both transcription and genome replication. Together with VP3 capping enzyme, forms an enzyme complex positioned near the channels situated at each of the five-fold vertices of the core. Following infection, the outermost layer of the virus is lost, leaving a double-layered particle (DLP) made up of the core and VP6 shell. VP1 then catalyzes the transcription of fully conservative plus-strand genomic RNAs that are extruded through the DLP's channels into the cytoplasm where they function as mRNAs for translation of viral proteins. One copy of each of the viral (+)RNAs is also recruited during core assembly, together with newly synthesized polymerase complexes and VP2. The polymerase of these novo-formed particles catalyzes the synthesis of complementary minus-strands leading to dsRNA formation. To do so, the polymerase specifically recognizes and binds 4 bases 5'-UGUG-3' in the conserved 3'-sequence of plus-strand RNA templates. VP2 presumably activates the autoinhibited VP1-RNA complex to coordinate packaging and genome replication. Once dsRNA synthesis is complete, the polymerase switches to the transcriptional mode, thus providing secondary transcription. The chain is RNA-directed RNA polymerase from Sus scrofa (Pig).